The chain runs to 1218 residues: Sodium bicarbonate cotransporter 3 (1218 aa).

Disordered regions lie at residues 1 to 31 and 53 to 99; these read MEAD…KTSS and HVPF…SQRV. At 1 to 612 the chain is on the extracellular side; the sequence is MEADGAGEQM…DFKDALSLQC (612 aa). A phosphoserine mark is found at S57, S60, S89, and S155. Residues 60–77 show a composition bias toward basic residues; sequence SRRRHRHRGHKHHHRRRK. Basic and acidic residues predominate over residues 78-90; sequence DKDSDKEDGRESP. A glycan (N-linked (GlcNAc...) asparagine) is linked at N176. Residues S238, S247, and R263 each carry the phosphoserine modification. N-linked (GlcNAc...) asparagine glycosylation occurs at N274. Disordered regions lie at residues 294–350, 364–412, and 536–577; these read SRAG…DIPR, KGQE…ENST, and SIRI…HAGP. Residues 308 to 318 are compositionally biased toward pro residues; sequence VPTPQNSPPSS. Residues 319–337 show a composition bias toward low complexity; the sequence is PSLSRLTSRSSQQTQPQAP. A compositionally biased stretch (polar residues) spans 383–396; that stretch reads SPQSAPGNLDSSKS. A phosphoserine mark is found at S386, S404, and S407. A glycan (N-linked (GlcNAc...) asparagine) is linked at N410. A phosphoserine mark is found at S411 and S560. Residues 567–576 show a composition bias toward basic and acidic residues; sequence PPKEADHHAG. The chain crosses the membrane as a helical span at residues 613–633; that stretch reads LASILFLYCACMSPVITFGGL. The Cytoplasmic portion of the chain corresponds to 634–641; that stretch reads LGEATEGR. Residues 642 to 662 form a helical membrane-spanning segment; the sequence is ISAIESLFGASLTGIAYSLFA. At 663-699 the chain is on the extracellular side; sequence GQPLTILGSTGPVLVFEKILFKFCRDYHLSYLSLRTS. A helical transmembrane segment spans residues 700 to 720; it reads IGLWTSFLCIVLVATDASSLV. The Cytoplasmic portion of the chain corresponds to 721-729; it reads CYITRFTEE. A helical transmembrane segment spans residues 730–750; the sequence is AFAALICIIFIYEALEKLFHL. Residues 751–821 are Extracellular-facing; the sequence is GEIYAFNMHN…MFVGSACGPH (71 aa). C770 and C772 form a disulfide bridge. N780, N790, and N800 each carry an N-linked (GlcNAc...) asparagine glycan. C806 and C818 are oxidised to a cystine. The chain crosses the membrane as a helical span at residues 822–842; it reads GPYVPDVLFWCVVLFFTTFFL. Residues 843-865 are Cytoplasmic-facing; sequence SSFLKQFKTKRYFPTKVRSTISD. Residues 866–886 traverse the membrane as a helical segment; that stretch reads FAVFLTIVIMVAIDYLVGIPS. Residues 887–912 are Extracellular-facing; that stretch reads PKLHVPEKFEPTDPSRGWIISPLGDN. A helical transmembrane segment spans residues 913 to 933; sequence PWWTLLIAAVPALLCTILIFM. Residues 934–958 are Cytoplasmic-facing; it reads DQQITAVIINRKEHKLKKGAGYHLD. A helical membrane pass occupies residues 959 to 979; sequence LLMVAVMLGVCSIMGLPWFVA. The Extracellular segment spans residues 980–1015; sequence ATVLSISHVNSLKVESECSAPGEQPKFLGIREQRVT. The interval 1012-1135 is essential for cell membrane localization and transport activity; sequence QRVTGLMIFI…MDLCFTKREL (124 aa). A helical transmembrane segment spans residues 1016-1036; that stretch reads GLMIFILMGLSVFMTSVLKFI. Residues 1037–1038 are Cytoplasmic-facing; it reads PM. A helical membrane pass occupies residues 1039-1059; that stretch reads PVLYGVFLYMGVSSLKGIQFF. At 1060-1096 the chain is on the extracellular side; that stretch reads DRIKLFGMPAKHQPDLIYLRYVPLWKVHVFTVVQLTC. 2 positions are modified to phosphoserine: M1067 and L1078. Residues 1097-1117 form a helical membrane-spanning segment; it reads LVLLWVIKASAAAVVFPMMVL. The interval 1118-1140 is essential for interaction with RACK1; that stretch reads ALVFVRKLMDLCFTKRELSWLDD. The Cytoplasmic portion of the chain corresponds to 1118-1218; that stretch reads ALVFVRKLMD…KKYMDAETSL (101 aa). A CA2-binding region spans residues 1138–1140; it reads LDD. A compositionally biased stretch (basic and acidic residues) spans 1148 to 1165; that stretch reads KKEDDKKKKEKEEAERML. The disordered stretch occupies residues 1148–1172; sequence KKEDDKKKKEKEEAERMLQGDGDTV. At T1171 the chain carries Phosphothreonine. Phosphoserine is present on residues S1180, T1188, I1201, and S1217. The short motif at 1215–1218 is the PDZ-binding element; it reads ETSL.

The protein belongs to the anion exchanger (TC 2.A.31) family. As to quaternary structure, interacts with USH1C. Forms a complex with ATP6V1B1 and NHERF1/EBP50. Interacts in a pH dependent-manner with CA2/carbonic anhydrase 2. Interacts with CFTR probably through NHERF1/EBP50. Interacts with RACK1. Post-translationally, undergoes lysosome-mediated degradation. In terms of processing, N-glycosylated. In terms of tissue distribution, expressed in aorta, ventricles, atrium, mesenteric artery, kidney, spleen, duodenum, jejunum, ileum, colon, lung, trachea, gastric fundus and pylorus, cerebrum, cerebellum, pancreas, liver, parotid gland, and epididymis. Expressed in the inner ear by cochlear outer and inner hair cells (at protein level). Highly expressed in testis and spleen. Specifically expressed in kidney. As to expression, specifically expressed in hippocampal neurons.

It localises to the basolateral cell membrane. The protein localises to the apical cell membrane. The protein resides in the cell projection. It is found in the stereocilium. Its subcellular location is the cell membrane. It carries out the reaction hydrogencarbonate(in) + Na(+)(in) = hydrogencarbonate(out) + Na(+)(out). With respect to regulation, insensitive to stilbene derivatives. Its function is as follows. Electroneutral sodium- and bicarbonate-dependent cotransporter with a Na(+):HCO3(-) 1:1 stoichiometry. Mediates the sodium-dependent bicarbonate transport important for pH recovery after acid load as well as for regulation of steady-state pH in the duodenum and vascular smooth muscle cells. Plays a key role in macrophage acidification, mediating bicarbonate import into the cytoplasm which is crucial for net acid extrusion and maintenance of cytoplasmic pH during phagocytosis. Provides cellular bicarbonate for de novo purine and pyrimidine synthesis and is a key mediator of de novo nucleotide synthesis downstream of mTORC1 signaling in proliferating cells. In Rattus norvegicus (Rat), this protein is Sodium bicarbonate cotransporter 3 (Slc4a7).